The chain runs to 59 residues: Large ribosomal subunit protein uL30 (59 aa).

The protein belongs to the universal ribosomal protein uL30 family. Part of the 50S ribosomal subunit.

This Photobacterium profundum (strain SS9) protein is Large ribosomal subunit protein uL30.